We begin with the raw amino-acid sequence, 112 residues long: Ribonuclease P protein component (112 aa).

This sequence belongs to the RnpA family. As to quaternary structure, consists of a catalytic RNA component (M1 or rnpB) and a protein subunit.

It carries out the reaction Endonucleolytic cleavage of RNA, removing 5'-extranucleotides from tRNA precursor.. Its function is as follows. RNaseP catalyzes the removal of the 5'-leader sequence from pre-tRNA to produce the mature 5'-terminus. It can also cleave other RNA substrates such as 4.5S RNA. The protein component plays an auxiliary but essential role in vivo by binding to the 5'-leader sequence and broadening the substrate specificity of the ribozyme. The sequence is that of Ribonuclease P protein component from Pelotomaculum thermopropionicum (strain DSM 13744 / JCM 10971 / SI).